The chain runs to 299 residues: MNKDNVKLAIAPIGWTNDDMPELGSENTFQQIVSEMALAGFTGSEVGSKYPRDPAVLKPMLDIRGIQICNAWFSTFFANGQREKTIDEFVNHMNFLHAMGAKVIGCSEQSGSIQGLDKPILGDAKPCFSDEEWQRVAEGYNTLGRLAAEKGMQVCLHHHMGTGIQTTAEIDKFMSLVDERVFLLFDTGHAWYSEGGEAPMLAILKKYLPRINHVHLKDVRPPVIDQVRRDGLSFLDGVKKGTFTVPGDGVIDFRPVFKLLDDFGYKGWMVVEAEQDPALANPFEYAVKARKYIRETAGI.

The protein belongs to the IolE/MocC family. Glutathione is required as a cofactor. The cofactor is Co(2+). Requires Mn(2+) as cofactor.

The catalysed reaction is scyllo-inosose = 3D-3,5/4-trihydroxycyclohexane-1,2-dione + H2O. Functionally, catalyzes the dehydration of inosose (2-keto-myo-inositol, 2KMI or 2,4,6/3,5-pentahydroxycyclohexanone) to 3D-(3,5/4)-trihydroxycyclohexane-1,2-dione (D-2,3-diketo-4-deoxy-epi-inositol). The sequence is that of Inosose dehydratase from Klebsiella pneumoniae subsp. pneumoniae (strain ATCC 700721 / MGH 78578).